We begin with the raw amino-acid sequence, 162 residues long: uncharacterized protein (162 aa).

This is an uncharacterized protein from Schizosaccharomyces pombe (strain 972 / ATCC 24843) (Fission yeast).